A 98-amino-acid polypeptide reads, in one-letter code: Small ribosomal subunit protein uS19 (98 aa).

This sequence belongs to the universal ribosomal protein uS19 family.

Protein S19 forms a complex with S13 that binds strongly to the 16S ribosomal RNA. In Chlorobaculum tepidum (strain ATCC 49652 / DSM 12025 / NBRC 103806 / TLS) (Chlorobium tepidum), this protein is Small ribosomal subunit protein uS19.